We begin with the raw amino-acid sequence, 2946 residues long: Neurobeachin (2946 aa).

The interval 971-995 (ENIKKGKKGNVSTISGLSSQTTGAK) is disordered. The span at 980–993 (NVSTISGLSSQTTG) shows a compositional bias: polar residues. 2 positions are modified to phosphoserine: Ser1011 and Ser1014. The WD 1 repeat unit spans residues 1326-1368 (TTMFRIPEFKWSPMHQRLLTDLLFALETDVHVWRSHSTKSVMD). 4 disordered regions span residues 1490-1531 (QRDR…LSPI), 1651-1675 (TIKE…HTDS), 1711-1731 (VKKS…PATS), and 1841-1860 (GAVD…VNGA). Residues 1497 to 1517 (SSHGSSKPQEVPQSVTATAAS) are compositionally biased toward polar residues. A Phosphoserine modification is found at Ser1529. A phosphoserine mark is found at Ser1714 and Ser1717. Residues 1716-1731 (ESLTENPSETLKPATS) are compositionally biased toward polar residues. Residues 1845–1855 (SGSSSSSSSSS) show a composition bias toward low complexity. The residue at position 2138 (Ser2138) is a Phosphoserine. The region spanning 2147 to 2255 (NLAGPVVLST…TVKKVVYSLP (109 aa)) is the BEACH-type PH domain. The BEACH domain occupies 2274 to 2563 (ATPRQLYKSS…QLLIEPHPPR (290 aa)). Residue Ser2575 is modified to Phosphoserine. 4 WD repeats span residues 2718–2761 (GHWD…HIIG), 2778–2818 (GHDH…RALE), 2860–2899 (EIND…QLYI), and 2902–2941 (GCDA…WHYE).

The protein belongs to the WD repeat neurobeachin family. In terms of assembly, interacts with RII subunit of PKA. Predominant in many brain structures. Also expressed at medium levels in spleen, thymus, prostate, testis and ovary. Low level expression is seen in heart, kidney, pancreas, skeletal muscle and intestine.

It localises to the cytoplasm. It is found in the membrane. Its function is as follows. Binds to type II regulatory subunits of protein kinase A and anchors/targets them to the membrane. May anchor the kinase to cytoskeletal and/or organelle-associated proteins. In Homo sapiens (Human), this protein is Neurobeachin.